The chain runs to 305 residues: UDP-3-O-acyl-N-acetylglucosamine deacetylase (305 aa).

Residues His79, His238, and Asp242 each coordinate Zn(2+). Residue His265 is the Proton donor of the active site.

Belongs to the LpxC family. Zn(2+) serves as cofactor.

It carries out the reaction a UDP-3-O-[(3R)-3-hydroxyacyl]-N-acetyl-alpha-D-glucosamine + H2O = a UDP-3-O-[(3R)-3-hydroxyacyl]-alpha-D-glucosamine + acetate. It functions in the pathway glycolipid biosynthesis; lipid IV(A) biosynthesis; lipid IV(A) from (3R)-3-hydroxytetradecanoyl-[acyl-carrier-protein] and UDP-N-acetyl-alpha-D-glucosamine: step 2/6. Functionally, catalyzes the hydrolysis of UDP-3-O-myristoyl-N-acetylglucosamine to form UDP-3-O-myristoylglucosamine and acetate, the committed step in lipid A biosynthesis. This chain is UDP-3-O-acyl-N-acetylglucosamine deacetylase, found in Salmonella paratyphi A (strain ATCC 9150 / SARB42).